The sequence spans 672 residues: Nuclear RNA export factor 1 (672 aa).

Disordered stretches follow at residues 1-52 (MPKR…SFKP) and 73-101 (DEDDDMSDMTTAVKDRPTSRRRGSPIPRG). The segment covering 40-49 (RKDRNKRRVS) has biased composition (basic residues). The 81-residue stretch at 113–193 (WYQVTLQNAQ…PRVRSGIPLV (81 aa)) folds into the RRM domain. 4 LRR repeats span residues 255-280 (DLEALNLNDNSISSMEAFKGVEKRLP), 281-304 (NLKILYLGDNKIPSLAHLVVLRNL), 305-332 (SILELVLKNNPCRSRYKDSQQFISEVRR), and 333-360 (KFPKLVKLDGETLEPQITFDLSEQGRLL). One can recognise an NTF2 domain in the interval 375-529 (VVRQFLDQYF…FCIRNETIFI (155 aa)). The interval 541–564 (KRSQHQPAPGAMPSTSSAVTSPQA) is disordered. The span at 553–563 (PSTSSAVTSPQ) shows a compositional bias: polar residues. S561 bears the Phosphoserine mark. Residues 618–672 (STKMQMIEAMSAQSQMNVIWSRKCLEETNWDFNHAAFVFEKLFKENKIPPEAFMK) form the TAP-C domain.

It belongs to the NXF family. As to quaternary structure, interacts with Nxt1. Interacts with ZC3H3. Forms a complex with Nup358/RanBP2, RanGAP and Nxt1. Interacts with Nup54 and Nup58. Interacts with Orc3 and Hpr1. In terms of tissue distribution, expressed ubiquitously.

It is found in the nucleus. The protein resides in the nucleoplasm. The protein localises to the cytoplasm. It localises to the nucleus envelope. Its function is as follows. Mediates the export of the majority of mRNAs from the nucleus to the cytoplasm. In ovarian follicle cells, plays a role in transposable element silencing regulation by enabling the nuclear export of flamenco (flam) transcripts and subsequent piRNA biogenesis. The chain is Nuclear RNA export factor 1 from Drosophila melanogaster (Fruit fly).